Consider the following 21-residue polypeptide: Fibrinogen beta chain (21 aa).

A Pyrrolidone carboxylic acid modification is found at Gln1. Tyr6 bears the Sulfotyrosine mark.

Heterohexamer; disulfide linked. Contains 2 sets of 3 non-identical chains (alpha, beta and gamma). The 2 heterotrimers are in head to head conformation with the N-termini in a small central domain. In terms of processing, conversion of fibrinogen to fibrin is triggered by thrombin, which cleaves fibrinopeptides A and B from alpha and beta chains, and thus exposes the N-terminal polymerization sites responsible for the formation of the soft clot.

The protein resides in the secreted. Cleaved by the protease thrombin to yield monomers which, together with fibrinogen alpha (FGA) and fibrinogen gamma (FGG), polymerize to form an insoluble fibrin matrix. Fibrin has a major function in hemostasis as one of the primary components of blood clots. In addition, functions during the early stages of wound repair to stabilize the lesion and guide cell migration during re-epithelialization. Was originally thought to be essential for platelet aggregation, based on in vitro studies using anticoagulated blood. However subsequent studies have shown that it is not absolutely required for thrombus formation in vivo. Enhances expression of SELP in activated platelets. Maternal fibrinogen is essential for successful pregnancy. Fibrin deposition is also associated with infection, where it protects against IFNG-mediated hemorrhage. May also facilitate the antibacterial immune response via both innate and T-cell mediated pathways. This Odocoileus hemionus (Mule deer) protein is Fibrinogen beta chain (FGB).